Here is a 1194-residue protein sequence, read N- to C-terminus: Pre-mRNA-processing ATP-dependent RNA helicase prp-5 (1194 aa).

Disordered stretches follow at residues M1–K201, A224–A248, and A452–G484. 2 stretches are compositionally biased toward basic and acidic residues: residues R21–D37 and S44–P154. The span at P156 to T176 shows a compositional bias: polar residues. Basic and acidic residues predominate over residues E177–R186. The segment covering S232 to A248 has biased composition (low complexity). Positions E455–N469 are enriched in basic and acidic residues. The Q motif signature appears at Q561–M589. A Helicase ATP-binding domain is found at L592–I770. Residue A605–T612 coordinates ATP. The DEAD box motif lies at D718–D721. Residues R797–R945 enclose the Helicase C-terminal domain. Disordered stretches follow at residues V952–K1011 and D1025–A1056. Basic and acidic residues-rich tracts occupy residues G967–M980, E997–K1011, and D1025–A1036.

It belongs to the DEAD box helicase family. DDX46/PRP5 subfamily.

It is found in the nucleus. It catalyses the reaction ATP + H2O = ADP + phosphate + H(+). Its function is as follows. ATP-dependent RNA helicase involved spliceosome assembly and in nuclear splicing. Catalyzes an ATP-dependent conformational change of U2 snRNP. Bridges U1 and U2 snRNPs and enables stable U2 snRNP association with intron RNA. In Neurospora crassa (strain ATCC 24698 / 74-OR23-1A / CBS 708.71 / DSM 1257 / FGSC 987), this protein is Pre-mRNA-processing ATP-dependent RNA helicase prp-5 (prp-5).